A 387-amino-acid polypeptide reads, in one-letter code: Homoserine O-succinyltransferase (387 aa).

Residues 49–358 form the AB hydrolase-1 domain; that stretch reads NAILICHALS…DAEQGHDSFL (310 aa). S156 serves as the catalytic Nucleophile. R226 is a substrate binding site. Residues D321 and H354 contribute to the active site. A substrate-binding site is contributed by D355.

It belongs to the AB hydrolase superfamily. MetX family. Homodimer.

It localises to the cytoplasm. The enzyme catalyses L-homoserine + succinyl-CoA = O-succinyl-L-homoserine + CoA. It functions in the pathway amino-acid biosynthesis; L-methionine biosynthesis via de novo pathway; O-succinyl-L-homoserine from L-homoserine: step 1/1. Requires MetW for activity. Functionally, transfers a succinyl group from succinyl-CoA to L-homoserine, forming succinyl-L-homoserine. The polypeptide is Homoserine O-succinyltransferase (Acinetobacter baylyi (strain ATCC 33305 / BD413 / ADP1)).